Consider the following 100-residue polypeptide: Urease subunit gamma (100 aa).

Belongs to the urease gamma subunit family. In terms of assembly, heterotrimer of UreA (gamma), UreB (beta) and UreC (alpha) subunits. Three heterotrimers associate to form the active enzyme.

The protein resides in the cytoplasm. It catalyses the reaction urea + 2 H2O + H(+) = hydrogencarbonate + 2 NH4(+). The protein operates within nitrogen metabolism; urea degradation; CO(2) and NH(3) from urea (urease route): step 1/1. This Nostoc sp. (strain PCC 7120 / SAG 25.82 / UTEX 2576) protein is Urease subunit gamma.